A 368-amino-acid polypeptide reads, in one-letter code: MMSSSSPTQLASLRDMGIYEPFQQIVGWGNVFKSDINDHSPNTATSSIIQVDPRIDDHNNNIKINYDSSHNQIEAEQPSSNDNQDDDGRIHDKMKRRLAQNREAARKSRLRKKAYVQQLEESRLKLSQLEQELEKVKQQGHLGPSGSINTGIASFEMEYSHWLQEQSRRVSELRTALQSHISDIELKMLVESCLNHYANLFQMKSDAAKADVFYLISGMWRTSTERFFQWIGGFRPSELLNVVMPYLQPLTDQQILEVRNLQQSSQQAEDALSQGIDKLQQSLAESIVIDAVIESTHYPTHMAAAIENLQALEGFVNQADHLRQQTLQQMAKILTTRQSARGLLALGEYLHRLRALSSLWAARPQEPT.

A compositionally biased stretch (polar residues) spans 70–82 (HNQIEAEQPSSND). Positions 70–89 (HNQIEAEQPSSNDNQDDDGR) are disordered. A bZIP domain is found at 91–151 (HDKMKRRLAQ…LGPSGSINTG (61 aa)). 2 coiled-coil regions span residues 92-142 (DKMK…QGHL) and 252-285 (DQQILEVRNLQQSSQQAEDALSQGIDKLQQSLAE). The segment at 93-113 (KMKRRLAQNREAARKSRLRKK) is basic motif. The segment at 119–133 (LEESRLKLSQLEQEL) is leucine-zipper. A DOG1 domain is found at 152-363 (IASFEMEYSH…RALSSLWAAR (212 aa)).

It belongs to the bZIP family. In terms of assembly, binds DNA as a dimer. Interacts with NPR1 and NPR4. Interacts with GRXC7/ROXY1.

It localises to the nucleus. In terms of biological role, transcriptional activator that binds specifically to the DNA sequence 5'-TGACG-3'. Recognizes ocs elements like the as-1 motif of the cauliflower mosaic virus 35S promoter. Binding to the as-1-like cis elements mediate auxin- and salicylic acid-inducible transcription. May be involved in the induction of the systemic acquired resistance (SAR) via its interaction with NPR1. The protein is Transcription factor TGA7 (TGA7) of Arabidopsis thaliana (Mouse-ear cress).